The primary structure comprises 132 residues: Small ribosomal subunit protein uS8 (132 aa).

Belongs to the universal ribosomal protein uS8 family. Part of the 30S ribosomal subunit. Contacts proteins S5 and S12.

Its function is as follows. One of the primary rRNA binding proteins, it binds directly to 16S rRNA central domain where it helps coordinate assembly of the platform of the 30S subunit. The polypeptide is Small ribosomal subunit protein uS8 (Corynebacterium glutamicum (strain R)).